The primary structure comprises 1656 residues: Outer membrane protein B (1656 aa).

The propeptide occupies glycine 1339 to alanine 1363. The region spanning valine 1368–phenylalanine 1656 is the Autotransporter domain.

Belongs to the rickettsiae OmpA/OmpB family.

It is found in the periplasm. It localises to the secreted. The protein localises to the cell surface. Its subcellular location is the cell outer membrane. Its function is as follows. The 120 kDa surface-exposed protein is a major structural protein which may play a role as a rickettsial virulence factor and/or immunogen during infection. The 32 kDa beta peptide may serve as a membrane anchor. In Rickettsia japonica (strain ATCC VR-1363 / YH), this protein is Outer membrane protein B (ompB).